The sequence spans 301 residues: 4-hydroxy-tetrahydrodipicolinate synthase (301 aa).

Position 46 (Thr46) interacts with pyruvate. Residue Tyr135 is the Proton donor/acceptor of the active site. The Schiff-base intermediate with substrate role is filled by Lys163. Residue Ile205 participates in pyruvate binding.

Belongs to the DapA family. Homotetramer; dimer of dimers.

Its subcellular location is the cytoplasm. The catalysed reaction is L-aspartate 4-semialdehyde + pyruvate = (2S,4S)-4-hydroxy-2,3,4,5-tetrahydrodipicolinate + H2O + H(+). The protein operates within amino-acid biosynthesis; L-lysine biosynthesis via DAP pathway; (S)-tetrahydrodipicolinate from L-aspartate: step 3/4. Functionally, catalyzes the condensation of (S)-aspartate-beta-semialdehyde [(S)-ASA] and pyruvate to 4-hydroxy-tetrahydrodipicolinate (HTPA). This is 4-hydroxy-tetrahydrodipicolinate synthase from Lacticaseibacillus casei (strain BL23) (Lactobacillus casei).